The sequence spans 344 residues: MPLIPYALTRPFLFGLDAEHAHELTLASIARLQNTPLQCLWQQPRIDDPVTLAGVRFPNRIGLAAGLDKNGRCIDGFGAMGFGFIEVGTVTPKGQPGNPKPRIFRLPQAEALINRLGFNNDGLDAFLANVRRAGFRQGGGVLGLNIGKNAATPIEDAVDDYLLGLEGVYPHADYVTVNISSPNTQNLRSLQSDAALDALLGRLQERRQQLIARHGRSVPMFVKIAPDLDEAQVDVIAATLKKNAVDGVIATNTTLSRDAVRGQAHATEVGGLSGRPVFEASNRVVGQLRAALGAGYPIIGVGGVMSGADARAKRDVGADVVQIYTGLIYRGPALVSEAARALKG.

Residues 65–69 and threonine 89 each bind FMN; that span reads AGLDK. Lysine 69 is a substrate binding site. A substrate-binding site is contributed by 114–118; it reads NRLGF. Positions 145 and 178 each coordinate FMN. Residue asparagine 178 coordinates substrate. Serine 181 acts as the Nucleophile in catalysis. Asparagine 183 contributes to the substrate binding site. 2 residues coordinate FMN: lysine 223 and threonine 251. Substrate is bound at residue 252-253; the sequence is NT. FMN contacts are provided by residues glycine 274, glycine 303, and 324–325; that span reads YT.

This sequence belongs to the dihydroorotate dehydrogenase family. Type 2 subfamily. As to quaternary structure, monomer. It depends on FMN as a cofactor.

It localises to the cell membrane. The catalysed reaction is (S)-dihydroorotate + a quinone = orotate + a quinol. The protein operates within pyrimidine metabolism; UMP biosynthesis via de novo pathway; orotate from (S)-dihydroorotate (quinone route): step 1/1. Functionally, catalyzes the conversion of dihydroorotate to orotate with quinone as electron acceptor. This chain is Dihydroorotate dehydrogenase (quinone), found in Methylibium petroleiphilum (strain ATCC BAA-1232 / LMG 22953 / PM1).